The sequence spans 394 residues: Probable aspartate/prephenate aminotransferase (394 aa).

L-aspartate-binding residues include Gly-40, Trp-126, and Asn-176. The residue at position 239 (Lys-239) is an N6-(pyridoxal phosphate)lysine. Arg-370 provides a ligand contact to L-aspartate.

It belongs to the class-I pyridoxal-phosphate-dependent aminotransferase family. Homodimer. Pyridoxal 5'-phosphate is required as a cofactor.

It is found in the cytoplasm. The enzyme catalyses L-aspartate + 2-oxoglutarate = oxaloacetate + L-glutamate. It catalyses the reaction L-arogenate + oxaloacetate = prephenate + L-aspartate. Its function is as follows. Catalyzes the reversible conversion of aspartate and 2-oxoglutarate to glutamate and oxaloacetate. Can also transaminate prephenate in the presence of aspartate. This Aquifex aeolicus (strain VF5) protein is Probable aspartate/prephenate aminotransferase (aspC).